Reading from the N-terminus, the 542-residue chain is Aspartate kinase FUB3 (542 aa).

ACT domains are found at residues 404–472 (ILSN…VLPD) and 478–542 (LVGA…KSAI).

It belongs to the aspartokinase family.

It carries out the reaction L-aspartate + ATP = 4-phospho-L-aspartate + ADP. It participates in mycotoxin biosynthesis. In terms of biological role, aspartate kinase; part of the gene cluster that mediates the biosynthesis of fusaric acid, a mycotoxin with low to moderate toxicity to animals and humans, but with high phytotoxic properties. L-aspartate is suggested as fusaric acid amino acid precursor that is activated and further processed to O-acetyl-L-homoserine by cluster enzymes aspartate kinase FUB3 and homoserine O-acetyltransferase FUB5, as well as enzymes of the primary metabolism. The polyketide synthase (PKS) FUB1 generates the triketide trans-2-hexenal which is presumptively released by the hydrolase FUB4 and linked to the NRPS-bound amino acid precursor by NAD(P)-dependent dehydrogenase FUB6. FUB1, FUB4, and the non-canonical NRPS Fub8 may form an enzyme complex. Further processing of the NRPS-bound intermediate might be carried out by FUB6 and the sulfhydrylase FUB7, enabling a spontaneous electrocyclization to close the carbon backbone of fusaric acid. Dihydrofusaric acid is likely to be released via reduction by the thioester reductase (TR) domain of FUB8 whereupon the final oxidation to fusaric acid may (also) be performed by the FMN-dependent dehydrogenase FUB9. The chain is Aspartate kinase FUB3 from Fusarium oxysporum f. sp. lycopersici (strain 4287 / CBS 123668 / FGSC 9935 / NRRL 34936) (Fusarium vascular wilt of tomato).